The following is a 209-amino-acid chain: A-type ATP synthase subunit D (209 aa).

The protein belongs to the V-ATPase D subunit family. In terms of assembly, has multiple subunits with at least A(3), B(3), C, D, E, F, H, I and proteolipid K(x).

The protein resides in the cell membrane. In terms of biological role, component of the A-type ATP synthase that produces ATP from ADP in the presence of a proton gradient across the membrane. In Thermoplasma volcanium (strain ATCC 51530 / DSM 4299 / JCM 9571 / NBRC 15438 / GSS1), this protein is A-type ATP synthase subunit D.